Consider the following 215-residue polypeptide: Probable phosphoglycerate mutase GpmB (215 aa).

Substrate contacts are provided by residues 8–15 (RHGETQWN), 21–22 (QG), Arg58, Lys60, 82–85 (ELDM), 104–105 (RR), and 151–152 (GI). His9 acts as the Tele-phosphohistidine intermediate in catalysis. Glu82 serves as the catalytic Proton donor/acceptor.

Belongs to the phosphoglycerate mutase family. GpmB subfamily.

The enzyme catalyses (2R)-2-phosphoglycerate = (2R)-3-phosphoglycerate. Its pathway is carbohydrate degradation; glycolysis; pyruvate from D-glyceraldehyde 3-phosphate: step 3/5. The chain is Probable phosphoglycerate mutase GpmB from Salmonella typhi.